Reading from the N-terminus, the 87-residue chain is UPF0367 protein Pro_0144 (87 aa).

It belongs to the UPF0367 family.

The protein is UPF0367 protein Pro_0144 of Prochlorococcus marinus (strain SARG / CCMP1375 / SS120).